Reading from the N-terminus, the 322-residue chain is Malate dehydrogenase 1 (322 aa).

Residues glycine 10–glycine 15 and aspartate 34 contribute to the NAD(+) site. 2 residues coordinate substrate: arginine 83 and arginine 89. NAD(+)-binding positions include asparagine 96 and isoleucine 119–asparagine 121. Substrate is bound by residues asparagine 121 and arginine 152. Histidine 176 acts as the Proton acceptor in catalysis.

This sequence belongs to the LDH/MDH superfamily. MDH type 3 family.

It carries out the reaction (S)-malate + NAD(+) = oxaloacetate + NADH + H(+). Its function is as follows. Catalyzes the reversible oxidation of malate to oxaloacetate. This is Malate dehydrogenase 1 from Rhodopseudomonas palustris (strain BisB18).